Here is a 278-residue protein sequence, read N- to C-terminus: Multidrug-efflux transporter 1 regulator (278 aa).

The region spanning 5-75 (YYSIGEVSKL…LEEMKKAQDL (71 aa)) is the HTH merR-type domain. Residues 8 to 27 (IGEVSKLANVSIKALRYYDK) constitute a DNA-binding region (H-T-H motif).

In terms of assembly, binds DNA as a homodimer.

Functionally, activates transcription of the bmr gene in response to structurally dissimilar drugs. Binds rhodamine as an inducer. The sequence is that of Multidrug-efflux transporter 1 regulator (bmrR) from Bacillus subtilis (strain 168).